Reading from the N-terminus, the 378-residue chain is Odorant receptor 45a (378 aa).

The Cytoplasmic segment spans residues 1 to 30 (MDASYFAVQRRALEIVGFDPSTPQLSLKHP). A helical membrane pass occupies residues 31–51 (IWAGILILSLISHNWPMVVYA). Residues 52 to 129 (LQDLSDLTRL…RYVARSFRNA (78 aa)) lie on the Extracellular side of the membrane. The chain crosses the membrane as a helical span at residues 130-150 (AYGVICASAIAPMLLGLWGYV). Residues 151–173 (ETGVFTPTTPMEFNFWLDERKPH) lie on the Cytoplasmic side of the membrane. A helical membrane pass occupies residues 174–194 (FYWPIYVWGVLGVAAAAWLAI). Topologically, residues 195-197 (ATD) are extracellular. The helical transmembrane segment at 198–218 (TLFSWLTHNVVIQFQLLELVL) threads the bilayer. Over 219-249 (EEKDLNGGDSRLTGFVSRHRIALDLAKELSS) the chain is Cytoplasmic. Residues 250–270 (IFGEIVFVKYMLSYLQLCMLA) traverse the membrane as a helical segment. Topologically, residues 271–285 (FRFSRSGWSAQVPFR) are extracellular. Residues 286 to 306 (ATFLVAIIIQLSSYCYGGEYI) traverse the membrane as a helical segment. Over 307 to 342 (KQQSLAIAQAVYGQINWPEMTPKKRRLWQMVIMRAQ) the chain is Cytoplasmic. A helical membrane pass occupies residues 343-363 (RPAKIFGFMFVVDLPLLLWVI). Topologically, residues 364-378 (RTAGSFLAMLRTFER) are extracellular.

It belongs to the insect chemoreceptor superfamily. Heteromeric odorant receptor channel (TC 1.A.69) family. Or1a subfamily. In terms of assembly, interacts with Orco. Complexes exist early in the endomembrane system in olfactory sensory neurons (OSNs), coupling these complexes to the conserved ciliary trafficking pathway.

The protein localises to the cell membrane. Its function is as follows. Odorant receptor which mediates acceptance or avoidance behavior, depending on its substrates. The odorant receptor repertoire encodes a large collection of odor stimuli that vary widely in identity, intensity, and duration. May form a complex with Orco to form odorant-sensing units, providing sensitive and prolonged odorant signaling and calcium permeability. Involved in the behavioral responses to hexanol, pentyl acetate, benzyl acetate, and 2-heptanone. This is Odorant receptor 45a (Or45a) from Drosophila melanogaster (Fruit fly).